Consider the following 264-residue polypeptide: Glutamate racemase (264 aa).

Substrate contacts are provided by residues 12–13 (DS) and 44–45 (YG). The active-site Proton donor/acceptor is the C75. 76–77 (NT) contacts substrate. C186 functions as the Proton donor/acceptor in the catalytic mechanism. 187–188 (TH) serves as a coordination point for substrate.

It belongs to the aspartate/glutamate racemases family.

It catalyses the reaction L-glutamate = D-glutamate. It participates in cell wall biogenesis; peptidoglycan biosynthesis. Functionally, provides the (R)-glutamate required for cell wall biosynthesis. The protein is Glutamate racemase of Stutzerimonas stutzeri (strain A1501) (Pseudomonas stutzeri).